Here is a 966-residue protein sequence, read N- to C-terminus: Regulator of telomere elongation helicase 1 homolog (966 aa).

The Helicase ATP-binding domain maps to 7–284 (AGIPVHFPFE…QDMAGDEPKD (278 aa)). 42-49 (SPTGTGKT) provides a ligand contact to ATP. The [4Fe-4S] cluster site is built by C146, C164, C173, and C209. Positions 233 to 236 (DEAH) match the DEAH box motif. The disordered stretch occupies residues 844-864 (VKIHKRERSSPTAPESTSQVS). Residues 853 to 863 (SPTAPESTSQV) show a composition bias toward polar residues. A Phosphothreonine modification is found at T855.

The protein belongs to the helicase family. RAD3/XPD subfamily.

It localises to the nucleus. It carries out the reaction ATP + H2O = ADP + phosphate + H(+). Its function is as follows. A probable ATP-dependent DNA helicase implicated in DNA repair and the maintenance of genomic stability. Acts as an anti-recombinase to counteract toxic recombination and limit crossover during meiosis. Regulates meiotic recombination and crossover homeostasis by physically dissociating strand invasion events and thereby promotes noncrossover repair by meiotic synthesis dependent strand annealing (SDSA) as well as disassembly of D loop recombination intermediates. The protein is Regulator of telomere elongation helicase 1 homolog of Drosophila sechellia (Fruit fly).